The following is a 679-amino-acid chain: Glycine--tRNA ligase beta subunit (679 aa).

This sequence belongs to the class-II aminoacyl-tRNA synthetase family. As to quaternary structure, tetramer of two alpha and two beta subunits.

It localises to the cytoplasm. It carries out the reaction tRNA(Gly) + glycine + ATP = glycyl-tRNA(Gly) + AMP + diphosphate. The chain is Glycine--tRNA ligase beta subunit (glyS) from Bacillus subtilis (strain 168).